The chain runs to 482 residues: UDP-sulfoquinovose synthase, chloroplastic (482 aa).

The transit peptide at 1-61 (MAHLLSTSCS…NNTQKLTVVR (61 aa)) directs the protein to the chloroplast. NAD(+) contacts are provided by residues 100-101 (YC), 120-124 (DNLVR), 163-164 (DI), R189, and N207. Residue R189 coordinates substrate. Substrate is bound by residues T233 and Y270. Residue T233 is part of the active site. 2 residues coordinate NAD(+): Y270 and K274. The active-site Proton acceptor is the Y270. K274 is an active-site residue. Residue Q297 coordinates substrate. V300 serves as a coordination point for NAD(+). Residues 327 to 330 (ALNR), 342 to 344 (TVY), and 415 to 417 (RVE) each bind substrate.

This sequence belongs to the NAD(P)-dependent epimerase/dehydratase family. In terms of assembly, homodimer. Interacts with FdGOGAT (via FMN-binding domain). It depends on NAD(+) as a cofactor. The N-terminus is blocked.

The protein localises to the plastid. Its subcellular location is the chloroplast stroma. It catalyses the reaction sulfite + UDP-alpha-D-glucose + H(+) = UDP-alpha-D-6-sulfoquinovose + H2O. Its function is as follows. Involved in the biosynthesis of sulfolipids found in thylakoid membranes. Converts UDP-glucose and sulfite to the sulfolipid head group precursor UDP-sulfoquinovose. The sulfite is delivered to the reaction center by the FMN-binding domain of FdGOGAT. In Spinacia oleracea (Spinach), this protein is UDP-sulfoquinovose synthase, chloroplastic (SQD1).